The primary structure comprises 263 residues: Glucosamine-6-phosphate deaminase (263 aa).

The active-site Proton acceptor; for enolization step is Asp-72. Residue Asp-141 is the For ring-opening step of the active site. The Proton acceptor; for ring-opening step role is filled by His-143. Glu-148 (for ring-opening step) is an active-site residue.

Belongs to the glucosamine/galactosamine-6-phosphate isomerase family. NagB subfamily.

It catalyses the reaction alpha-D-glucosamine 6-phosphate + H2O = beta-D-fructose 6-phosphate + NH4(+). The protein operates within amino-sugar metabolism; N-acetylneuraminate degradation; D-fructose 6-phosphate from N-acetylneuraminate: step 5/5. With respect to regulation, allosterically activated by N-acetylglucosamine 6-phosphate (GlcNAc6P). Its function is as follows. Catalyzes the reversible isomerization-deamination of glucosamine 6-phosphate (GlcN6P) to form fructose 6-phosphate (Fru6P) and ammonium ion. The sequence is that of Glucosamine-6-phosphate deaminase from Phocaeicola vulgatus (strain ATCC 8482 / DSM 1447 / JCM 5826 / CCUG 4940 / NBRC 14291 / NCTC 11154) (Bacteroides vulgatus).